Consider the following 1362-residue polypeptide: MSLHSKKSTSTVKDNEHSLDLSIKSIPSNEKNFSTEKSENEASESHVVDVVKDPFEQYTPEEQEILYKQINDTPAKLSGYPRILSYADKWDIMLQLAGTITGIGAGLGMPLMSLVSGQLAQAFTDLASGKGASSFQHTVDHFCLYFIYIAIGVFGCSYIYTVTFIIAGERIARRIRQDYLHAILSQNIGYFDRLGAGEITTRITTDTNFIQDGLGEKVGLVFFAIATFVSGFVIAFIRHWKFTLILSSMFPAICGGIGLGVPFITKNTKGQIAVVAESSTFVEEVFSNIRNAFAFGTQDILAKLYNKYLITAQRFGINKAIAMGLMVGWMFFVAYGVYGLAFWEGGRLLHAGDLDVSKLIGCFFAVLIASYSLANISPKMQSFVSCASAAKKIFDTIDRVSPINAFTPTGDVVKDIKGEIELKNIRFVYPTRPEVLVLDNFSLVCPSGKITALVGASGSGKSTIIGLVERFYDPIGGQVFLDGKDLRTLNVASLRNQISLVQQEPVLFATTVFENITYGLPDTIKGTLSKEELERRVYDAAKLANAYDFIMTLPEQFSTNVGQRGFLMSGGQKQRIAIARAVISDPKILLLDEATSALDSKSEVLVQKALDNASRSRTTIVIAHRLSTIRNADNIVVVNAGKIVEQGSHNELLDLNGAYARLVEAQKLSGGEKDQEMVEEELEDAPREIPITSFGDDDEDNDMASLEAPMMSHNTDTDTLNNKLNEKDNVVFEDKTLQHVASEIVPNLPPADVGELNEEPKKSKKSKKNNHEINSLTALWFIHSFVRTMIEIICLLIGILASMICGAAYPVQAAVFARFLNIFTDLSSTDFLHKVNVFAVYWLILAIVQFFAYAISNFAMTYAMEAVLQRIRYHLFRTLLRQDVEFFDRSENTVGAITTSLSTKIQSLEGLSGPTLGTFFQILTNIISVTILSLATGWKLGLVTLSTSPVIITAGYYRVRALDQVQEKLSAAYKESAAFACESTSAIRTVASLNREENVFAEYCDSLIKPGRESAIASLKSGLFFSAAQGVTFLINALTFWYGSTLMRKGEYNIVQFYTCFIAIVFGIQQAGQFFGYSADVTKAKAAAGEIKYLSESKPKIDTWSTEGKKVESLQSAAIEFRQVEFSYPTRRHIKVLRGLNLTVKPGQFVAFVGSSGCGKSTTIGLIERFYDCDNGAVLVDGVNVRDYNINDYRKQIALVSQEPTLYQGTVRENIVLGASKDVSEEEMIEACKKANIHEFILGLPNGYNTLCGQKGSSLSGGQKQRIAIARALIRNPKILLLDEATSALDSHSEKVVQEALNAASQGRTTVAIAHRLSSIQDADCIFVFDGGVIAEAGTHAELVKQRGRYYELVVEQGLNKA.

Residues 1-45 (MSLHSKKSTSTVKDNEHSLDLSIKSIPSNEKNFSTEKSENEASES) are disordered. The Cytoplasmic portion of the chain corresponds to 1–91 (MSLHSKKSTS…RILSYADKWD (91 aa)). Basic and acidic residues predominate over residues 33–45 (FSTEKSENEASES). 6 helical membrane-spanning segments follow: residues 92–115 (IMLQLAGTITGIGAGLGMPLMSLV), 138–162 (TVDHFCLYFIYIAIGVFGCSYIYTV), 220–237 (LVFFAIATFVSGFVIAFI), 244–264 (LILSSMFPAICGGIGLGVPFI), 320–346 (AIAMGLMVGWMFFVAYGVYGLAFWEGG), and 354–374 (LDVSKLIGCFFAVLIASYSLA). Positions 95 to 385 (QLAGTITGIG…ISPKMQSFVS (291 aa)) constitute an ABC transmembrane type-1 1 domain. At 375–788 (NISPKMQSFV…LWFIHSFVRT (414 aa)) the chain is on the cytoplasmic side. Residues 420–665 (IELKNIRFVY…NGAYARLVEA (246 aa)) enclose the ABC transporter 1 domain. 455–462 (GASGSGKS) is a binding site for ATP. Positions 748–768 (LPPADVGELNEEPKKSKKSKK) are disordered. The next 6 membrane-spanning stretches (helical) occupy residues 789-809 (MIEIICLLIGILASMICGAAY), 835-859 (VNVFAVYWLILAIVQFFAYAISNFA), 916-935 (LGTFFQILTNIISVTILSLA), 940-957 (LGLVTLSTSPVIITAGYY), 1022-1040 (GLFFSAAQGVTFLINALTF), and 1054-1072 (IVQFYTCFIAIVFGIQQAG). An ABC transmembrane type-1 2 domain is found at 795 to 1083 (LLIGILASMI…FFGYSADVTK (289 aa)). At 1073–1362 (QFFGYSADVT…LVVEQGLNKA (290 aa)) the chain is on the cytoplasmic side. One can recognise an ABC transporter 2 domain in the interval 1119–1356 (IEFRQVEFSY…RGRYYELVVE (238 aa)). Residue 1154–1161 (GSSGCGKS) participates in ATP binding.

It belongs to the ABC transporter superfamily. ABCB family. Multidrug resistance exporter (TC 3.A.1.201) subfamily.

It localises to the membrane. Functionally, may be a transmembrane transporter of the mating factor, namely P-factor or M-factor. Confers resistance to leptomycin B and to several other antifungal drugs. The chain is Leptomycin B resistance protein pmd1 (pmd1) from Schizosaccharomyces pombe (strain 972 / ATCC 24843) (Fission yeast).